The chain runs to 231 residues: Ribonuclease P protein component 3 (231 aa).

The protein belongs to the eukaryotic/archaeal RNase P protein component 3 family. As to quaternary structure, consists of a catalytic RNA component and at least 4-5 protein subunits.

The protein resides in the cytoplasm. It catalyses the reaction Endonucleolytic cleavage of RNA, removing 5'-extranucleotides from tRNA precursor.. In terms of biological role, part of ribonuclease P, a protein complex that generates mature tRNA molecules by cleaving their 5'-ends. The protein is Ribonuclease P protein component 3 of Methanococcus maripaludis (strain C5 / ATCC BAA-1333).